The following is a 1487-amino-acid chain: Adhesion G protein-coupled receptor L2 (1487 aa).

The first 25 residues, 1 to 25 (MVSSGCRMRSLWFIIIISFSPSTEG), serve as a signal peptide directing secretion. Over 26-855 (FSRAALPFGL…VHHLLLTVIT (830 aa)) the chain is Extracellular. An SUEL-type lectin domain is found at 41–130 (SCEGYSIDLR…KYLEVQYECV (90 aa)). Asn99 carries an N-linked (GlcNAc...) asparagine glycan. The Olfactomedin-like domain maps to 139-398 (VCPGTLKAIV…ILRYSLEFGP (260 aa)). Over residues 423–439 (STTSSASQRGPVSSTAA) the composition is skewed to polar residues. Positions 423 to 461 (STTSSASQRGPVSSTAAGPQDGSRGTKPPPAVSTTKIPP) are disordered. N-linked (GlcNAc...) asparagine glycans are attached at residues Asn524 and Asn735. One can recognise a GAIN-B domain in the interval 663–841 (TRVSMPTENI…AILMAHREIA (179 aa)). 2 disulfide bridges follow: Cys792–Cys823 and Cys811–Cys825. The interval 792 to 841 (CSFWNYSERTMMGYWSTQGCKLVDTNKTRTTCACSHLTNFAILMAHREIA) is GPS. Residues 829–841 (TNFAILMAHREIA) form a stachel region. A helical transmembrane segment spans residues 856 to 876 (WVGIVVSLVCLAICIFTFCFF). Topologically, residues 877–884 (RGLQSDRN) are cytoplasmic. The helical transmembrane segment at 885-905 (TIHKNLCINLFIAEFIFLIGI) threads the bilayer. Topologically, residues 906 to 911 (DKTKYT) are extracellular. Residues 912 to 932 (IACPVFAGLLHFFFLAAFSWM) traverse the membrane as a helical segment. Over 933-955 (CLEGVQLYLMLVEVFESEYSRKK) the chain is Cytoplasmic. A helical membrane pass occupies residues 956–976 (YYYVAGYLFPATVVGVSAAID). Residues 977–994 (YKSYGTVQACWLHVDNYF) lie on the Extracellular side of the membrane. The helical transmembrane segment at 995–1015 (IWSFIGPVTFIILLNIIFLVI) threads the bilayer. The Cytoplasmic segment spans residues 1016–1064 (TLCKMVKHSNTLKPDSSRLENINNYRVCDGYYNTDLPGYEDNKPFIKSW). Residues 1065–1085 (VLGAFALLCLLGLTWSFGLLF) traverse the membrane as a helical segment. At 1086-1090 (VNEET) the chain is on the extracellular side. The chain crosses the membrane as a helical span at residues 1091–1111 (VVMAYLFTAFNAFQGLFIFIF). The segment at 1386 to 1430 (EADDHLQSPNRDSLYTSMPNLRDSPYPESSPDMAEDLSPSRRSEN) is disordered. The segment covering 1392–1404 (QSPNRDSLYTSMP) has biased composition (polar residues). A phosphoserine mark is found at Ser1402, Ser1437, and Ser1458.

The protein belongs to the G-protein coupled receptor 2 family. Adhesion G-protein coupled receptor (ADGR) subfamily. As to quaternary structure, heterodimer of 2 chains generated by proteolytic processing; the large extracellular N-terminal fragment and the membrane-bound C-terminal fragment predominantly remain associated and non-covalently linked. Post-translationally, autoproteolytically processed at the GPS region of the GAIN-B domain; this cleavage modulates receptor activity. As to expression, ubiquitously expressed. In neurons, specifically localizes to dendritic domains of CA1 pyramidal neurons in the S. lacunosummoleculare.

It is found in the postsynaptic cell membrane. Forms a heterodimer of 2 chains generated by proteolytic processing that remain associated through non-covalent interactions mediated by the GAIN-B domain. In the inactivated receptor, the Stachel sequence (also named stalk) is embedded in the GAIN-B domain, where it adopts a beta-strand conformation. On activation, the Stachel moves into the 7 transmembrane region and adopts a twisted hook-shaped configuration that forms contacts within the receptor, leading to coupling of a G-alpha protein, which activates signaling. The cleaved GAIN-B and N-terminal domains can then dissociate from the rest of the receptor. Orphan adhesion G-protein coupled receptor (aGPCR), which mediates synapse specificity. Ligand binding causes a conformation change that triggers signaling via guanine nucleotide-binding proteins (G proteins) and modulates the activity of downstream effectors. Following G-protein coupled receptor activation, associates with cell adhesion molecules that are expressed at the surface of adjacent cells to direct synapse specificity. Specifically mediates the establishment of perforant-path synapses on CA1-region pyramidal neurons in the hippocampus. Localizes to postsynaptic spines in excitatory synapses in the S.lacunosum-moleculare and interacts with presynaptic cell adhesion molecules, such as teneurins, promoting synapse formation. This is Adhesion G protein-coupled receptor L2 from Mus musculus (Mouse).